The primary structure comprises 281 residues: Pantothenate synthetase (281 aa).

An ATP-binding site is contributed by 26–33 (MGYLHQGH). Catalysis depends on H33, which acts as the Proton donor. Position 57 (Q57) interacts with (R)-pantoate. Q57 serves as a coordination point for beta-alanine. 143–146 (GQKD) serves as a coordination point for ATP. Q149 contributes to the (R)-pantoate binding site. ATP contacts are provided by residues V172 and 180–183 (LSSR).

Belongs to the pantothenate synthetase family. In terms of assembly, homodimer.

It localises to the cytoplasm. The enzyme catalyses (R)-pantoate + beta-alanine + ATP = (R)-pantothenate + AMP + diphosphate + H(+). It functions in the pathway cofactor biosynthesis; (R)-pantothenate biosynthesis; (R)-pantothenate from (R)-pantoate and beta-alanine: step 1/1. Catalyzes the condensation of pantoate with beta-alanine in an ATP-dependent reaction via a pantoyl-adenylate intermediate. In Chloroflexus aurantiacus (strain ATCC 29366 / DSM 635 / J-10-fl), this protein is Pantothenate synthetase.